Consider the following 154-residue polypeptide: Large ribosomal subunit protein uL11 (154 aa).

It belongs to the universal ribosomal protein uL11 family. In terms of assembly, part of the ribosomal stalk of the 50S ribosomal subunit. Interacts with L10 and the large rRNA to form the base of the stalk. L10 forms an elongated spine to which L12 dimers bind in a sequential fashion forming a multimeric L10(L12)X complex. One or more lysine residues are methylated.

Functionally, forms part of the ribosomal stalk which helps the ribosome interact with GTP-bound translation factors. The sequence is that of Large ribosomal subunit protein uL11 from Leuconostoc mesenteroides subsp. mesenteroides (strain ATCC 8293 / DSM 20343 / BCRC 11652 / CCM 1803 / JCM 6124 / NCDO 523 / NBRC 100496 / NCIMB 8023 / NCTC 12954 / NRRL B-1118 / 37Y).